Here is a 2434-residue protein sequence, read N- to C-terminus: ATP-binding cassette sub-family A member 2 (2434 aa).

N-linked (GlcNAc...) asparagine glycosylation occurs at asparagine 14. 2 helical membrane passes run 22 to 42 (PWVL…LLGL) and 54 to 74 (AFYT…QSLC). N-linked (GlcNAc...) asparagine glycosylation is found at asparagine 89, asparagine 168, and asparagine 173. Glutamine 271 bears the N5-methylglutamine mark. Residues asparagine 305, asparagine 368, asparagine 379, asparagine 420, asparagine 432, asparagine 476, asparagine 484, asparagine 494, asparagine 530, asparagine 549, asparagine 590, asparagine 600, and asparagine 628 are each glycosylated (N-linked (GlcNAc...) asparagine). Residues 354–369 (RAPAPQAGSPSGPANS) are compositionally biased toward low complexity. Positions 354 to 396 (RAPAPQAGSPSGPANSTGVGANTGPNTTVEEGTQSPVTPASPD) are disordered. The span at 370–396 (TGVGANTGPNTTVEEGTQSPVTPASPD) shows a compositional bias: polar residues. Helical transmembrane passes span 699–719 (FLFV…VYSV), 750–770 (VAWF…LTAI), 782–802 (VLII…FCFL), 813–833 (ASAC…YVAI), 857–877 (AFGL…GIQW), and 893–913 (LLAV…TWYI). The ABC transporter 1 domain maps to 990 to 1221 (VCVDKLTKVY…YGDGYRLTLV (232 aa)). 1024 to 1031 (GHNGAGKT) contacts ATP. Positions 1225–1246 (AEPGTSQEPGMASSPSGRPQLS) are disordered. Residues 1228-1246 (GTSQEPGMASSPSGRPQLS) show a composition bias toward polar residues. Serine 1238 bears the Phosphoserine mark. A glycan (N-linked (GlcNAc...) asparagine) is linked at asparagine 1247. Residues serine 1327 and serine 1331 each carry the phosphoserine modification. The chain crosses the membrane as a helical span at residues 1461-1481 (ILLPAFFVCVAMTVALSVPEI). N-linked (GlcNAc...) asparagine glycans are attached at residues asparagine 1496, asparagine 1549, and asparagine 1557. The disordered stretch occupies residues 1587–1606 (NFVPPPPSPAPSDSPLSPDE). The segment covering 1589–1598 (VPPPPSPAPS) has biased composition (pro residues). 3 N-linked (GlcNAc...) asparagine glycosylation sites follow: asparagine 1613, asparagine 1678, and asparagine 1776. The next 5 helical transmembrane spans lie at 1793-1813 (VVIA…FVVF), 1842-1862 (VWDM…LFVF), 1873-1893 (FPAV…IMYP), 1906-1926 (VFLI…TFLL), and 1992-2012 (GLVA…MCQY). Residues 2051–2286 (VKIENLTKVY…FGDGYMITVR (236 aa)) form the ABC transporter 2 domain. Asparagine 2055 carries an N-linked (GlcNAc...) asparagine glycan. 2088–2095 (GVNGAGKT) is an ATP binding site. Threonine 2411 bears the Phosphothreonine mark.

This sequence belongs to the ABC transporter superfamily. ABCA family. In terms of processing, N-glycosylated. Methylated at Gln-271 by N6AMT1. In terms of tissue distribution, expressed at high levels in brain, at moderate levels in heart, kidney and lung, and at low levels in skeletal muscle, stomach, spleen, colon and pancreas. Not detected in the liver or small intestine. In brain, highly expressed in white matter and detected in oligodendrocytes. Expressed in cerebellum as well as the anterior commissure. Expressed mainly in the white matter but is also scattered in gray matter throughout the whole brain. Expressed in myelinating cells of both ventral and dorsal restricted regions in newborn spinal cord. Expressed in non-myelin-forming as well as in myelin-forming Schwann cells in the sciatic nerve.

It localises to the endosome membrane. The protein localises to the lysosome membrane. Its function is as follows. Probable transporter, its natural substrate has not been found yet. May have a role in macrophage lipid metabolism and neural development. May play a role in myelination, perhaps as a transporter for certain kinds of myelin chemical components. May play an important role in gamma-secretase processing of APP and thus in amyloid-beta peptide generation. Regulates esterification of plasma membrane cholesterol by modulation of sphingolipid metabolism. Functionally, probable lipid transporter that modulates cholesterol sequestration in the late endosome/lysosome by regulating the intracellular sphingolipid metabolism, in turn participates in cholesterol homeostasis. May alter the transbilayer distribution of ceramide in the intraluminal membrane lipid bilayer, favoring its retention in the outer leaflet that results in increased acid ceramidase activity in the late endosome/lysosome, facilitating ceramide deacylation to sphingosine leading to the sequestration of free cholesterol in lysosomes. In addition regulates amyloid-beta production either by activating a signaling pathway that regulates amyloid precursor protein transcription through the modulation of sphingolipid metabolism or through its role in gamma-secretase processing of APP. May play a role in myelin formation. The sequence is that of ATP-binding cassette sub-family A member 2 from Rattus norvegicus (Rat).